The sequence spans 93 residues: uncharacterized protein (93 aa).

This is an uncharacterized protein from Bacillus subtilis (strain 168).